Consider the following 706-residue polypeptide: Protein argonaute (706 aa).

Residues 1–108 (MGKEALLNLY…ELFRDFLTKT (108 aa)) are N-terminal domain. The linker L1 stretch occupies residues 109 to 165 (KVKDKFISDFYKKFRDKITVQGKNRKIALIPEVNEKVLKSEEGYFLLHLDLKFRIQP). The region spanning 168 to 259 (TLQTLLERND…YPATILKPVL (92 aa)) is the PAZ domain. The tract at residues 263-334 (NLEDEERNEV…AKGKNTKVIT (72 aa)) is linker L2. The interval 335–448 (NLRKFLELCR…YDFVKRELLK (114 aa)) is mid domain. One can recognise a Piwi domain in the interval 419-694 (LVIVFLEEYP…ITKLMLRGIE (276 aa)). The interval 449–706 (KMIPSQVILN…KKEGDIMYWL (258 aa)) is PIWI domain. Active-site residues include Asp-502, Glu-541, and Asp-571. Mn(2+) is bound at residue Asp-502. Asp-571 contributes to the Mn(2+) binding site. The tract at residues 612 to 650 (FIKGYFYKLSEDSVILATYNQVYEGTHQPIKVRKVYGEL) is PIWI box. The active site involves Asp-683. Mn(2+) is bound at residue Asp-683.

It belongs to the argonaute family. Long pAgo subfamily. Mg(2+) is required as a cofactor.

A DNA-guided RNA endonuclease. Uses short ssDNA sequences as guides (gDNA) to bind complementary target strands, resulting in cleavage of the target RNA. The cleavage site is 10 nucleotides downstream of the residue base paired with the 5'-end of the gDNA. Binds ssDNA better than ssRNA, binds dsDNA and DNA-RNA hybrids but does not bind dsRNA. A 2 nucleotide 3'-overhang (possibly on the guide strand) may help load nucleic acids into the complex. The polypeptide is Protein argonaute (Aquifex aeolicus (strain VF5)).